The primary structure comprises 206 residues: FMN-dependent NADH:quinone oxidoreductase (206 aa).

Residues S9, 15 to 17 (SVS), 95 to 98 (MYNF), and 139 to 142 (SRGG) each bind FMN.

The protein belongs to the azoreductase type 1 family. As to quaternary structure, homodimer. The cofactor is FMN.

It carries out the reaction 2 a quinone + NADH + H(+) = 2 a 1,4-benzosemiquinone + NAD(+). It catalyses the reaction N,N-dimethyl-1,4-phenylenediamine + anthranilate + 2 NAD(+) = 2-(4-dimethylaminophenyl)diazenylbenzoate + 2 NADH + 2 H(+). Quinone reductase that provides resistance to thiol-specific stress caused by electrophilic quinones. In terms of biological role, also exhibits azoreductase activity. Catalyzes the reductive cleavage of the azo bond in aromatic azo compounds to the corresponding amines. The chain is FMN-dependent NADH:quinone oxidoreductase from Legionella pneumophila subsp. pneumophila (strain Philadelphia 1 / ATCC 33152 / DSM 7513).